Consider the following 168-residue polypeptide: Ribosome rescue factor SmrB (168 aa).

The Smr domain occupies 92–167 (LDLHGLTKEQ…GDAAILILFE (76 aa)).

Belongs to the SmrB family. In terms of assembly, associates with collided ribosomes, but not with correctly translating polysomes.

In terms of biological role, acts as a ribosome collision sensor. Detects stalled/collided disomes (pairs of ribosomes where the leading ribosome is stalled and a second ribosome has collided with it) and endonucleolytically cleaves mRNA at the 5' boundary of the stalled ribosome. Stalled/collided disomes form a new interface (primarily via the 30S subunits) that binds SmrB. Cleaved mRNA becomes available for tmRNA ligation, leading to ribosomal subunit dissociation and rescue of stalled ribosomes. The sequence is that of Ribosome rescue factor SmrB from Pasteurella multocida (strain Pm70).